Consider the following 93-residue polypeptide: Em protein H2 (93 aa).

The interval 1–93 is disordered; it reads MASGQQERSQ…IDESKFKTKS (93 aa). Composition is skewed to basic and acidic residues over residues 9-19, 31-52, and 73-93; these read SQLDRKAREGE, LEAHENLAEGRSRGGQTRREQM, and GGERAAREGIDIDESKFKTKS.

The protein belongs to the small hydrophilic plant seed protein family.

In terms of biological role, it is thought to provide protection for the cytoplasm during the desiccation stage of embryo development. The chain is Em protein H2 (EMH2) from Triticum aestivum (Wheat).